Here is a 336-residue protein sequence, read N- to C-terminus: CENP-A histone chaperone scm3 (336 aa).

Residues 243-269 (RRRNPLLSSPKTPLRRSFSKSKVRNSN) are disordered. Basic residues predominate over residues 255–269 (PLRRSFSKSKVRNSN).

It localises to the cytoplasm. The protein resides in the nucleus. Its function is as follows. Centromeric protein that plays a central role in the incorporation and maintenance of histone H3-like variant CENPA at centromeres. The polypeptide is CENP-A histone chaperone scm3 (Schizosaccharomyces pombe (strain 972 / ATCC 24843) (Fission yeast)).